Reading from the N-terminus, the 147-residue chain is Large ribosomal subunit protein uL13 (147 aa).

Belongs to the universal ribosomal protein uL13 family. In terms of assembly, part of the 50S ribosomal subunit.

This protein is one of the early assembly proteins of the 50S ribosomal subunit, although it is not seen to bind rRNA by itself. It is important during the early stages of 50S assembly. This chain is Large ribosomal subunit protein uL13, found in Leuconostoc mesenteroides subsp. mesenteroides (strain ATCC 8293 / DSM 20343 / BCRC 11652 / CCM 1803 / JCM 6124 / NCDO 523 / NBRC 100496 / NCIMB 8023 / NCTC 12954 / NRRL B-1118 / 37Y).